A 351-amino-acid polypeptide reads, in one-letter code: Glycerol-3-phosphate dehydrogenase 1-like protein (351 aa).

Residue 12-17 (GSGNWG) participates in NAD(+) binding. Substrate is bound at residue K122. A155 contributes to the NAD(+) binding site. K206 acts as the Proton acceptor in catalysis. Residues R271, K298, and Q300 each contribute to the NAD(+) site. 271-272 (RN) serves as a coordination point for substrate.

This sequence belongs to the NAD-dependent glycerol-3-phosphate dehydrogenase family. As to quaternary structure, interacts with SCN5A.

The protein resides in the cytoplasm. It catalyses the reaction sn-glycerol 3-phosphate + NAD(+) = dihydroxyacetone phosphate + NADH + H(+). Functionally, plays a role in regulating cardiac sodium current; decreased enzymatic activity with resulting increased levels of glycerol 3-phosphate activating the DPD1L-dependent SCN5A phosphorylation pathway, may ultimately lead to decreased sodium current; cardiac sodium current may also be reduced due to alterations of NAD(H) balance induced by DPD1L. The sequence is that of Glycerol-3-phosphate dehydrogenase 1-like protein (GPD1L) from Pongo abelii (Sumatran orangutan).